Consider the following 77-residue polypeptide: Acyl carrier protein (77 aa).

Residues 1–76 (MADFEKVKSI…DVTKFIDNLK (76 aa)) enclose the Carrier domain. Ser36 carries the O-(pantetheine 4'-phosphoryl)serine modification.

This sequence belongs to the acyl carrier protein (ACP) family. In terms of processing, 4'-phosphopantetheine is transferred from CoA to a specific serine of apo-ACP by AcpS. This modification is essential for activity because fatty acids are bound in thioester linkage to the sulfhydryl of the prosthetic group.

Its subcellular location is the cytoplasm. Its pathway is lipid metabolism; fatty acid biosynthesis. Carrier of the growing fatty acid chain in fatty acid biosynthesis. The sequence is that of Acyl carrier protein from Leptospira borgpetersenii serovar Hardjo-bovis (strain JB197).